Consider the following 120-residue polypeptide: MAFRMSRDHADFVAHGGTEWDDGAFVNVKKIKIFHDWAGITLVQFDYIDGTGAIVSGLDHGTEPFQFDREHGRVPVEGARAEFWLRDDEYITIVTAFGGYCVRKIEFITNKRTFDFGGFN.

Positions 6–120 constitute a Jacalin-type lectin domain; it reads SRDHADFVAH…KRTFDFGGFN (115 aa).

It belongs to the jacalin lectin family.

This Arabidopsis thaliana (Mouse-ear cress) protein is Jacalin-related lectin 39 (JAL39).